Consider the following 424-residue polypeptide: UPF0229 protein Ping_2705 (424 aa).

The disordered stretch occupies residues P77–K108.

The protein belongs to the UPF0229 family.

The chain is UPF0229 protein Ping_2705 from Psychromonas ingrahamii (strain DSM 17664 / CCUG 51855 / 37).